We begin with the raw amino-acid sequence, 358 residues long: Neutral protease 2 homolog MGYG_02351 (358 aa).

The first 17 residues, methionine 1 to alanine 17, serve as a signal peptide directing secretion. Residues alanine 18–arginine 183 constitute a propeptide that is removed on maturation. 2 cysteine pairs are disulfide-bonded: cysteine 191-cysteine 260 and cysteine 267-cysteine 285. A Zn(2+)-binding site is contributed by histidine 309. Glutamate 310 is an active-site residue. Residues histidine 313 and aspartate 324 each contribute to the Zn(2+) site.

It belongs to the peptidase M35 family. Zn(2+) is required as a cofactor.

It localises to the secreted. The catalysed reaction is Preferential cleavage of bonds with hydrophobic residues in P1'. Also 3-Asn-|-Gln-4 and 8-Gly-|-Ser-9 bonds in insulin B chain.. Functionally, secreted metalloproteinase that allows assimilation of proteinaceous substrates. Shows high activities on basic nuclear substrates such as histone and protamine. May be involved in virulence. This Arthroderma gypseum (strain ATCC MYA-4604 / CBS 118893) (Microsporum gypseum) protein is Neutral protease 2 homolog MGYG_02351.